A 260-amino-acid polypeptide reads, in one-letter code: uncharacterized protein (260 aa).

The Radical SAM core domain occupies 6–239; the sequence is AGVRSGVVVS…VAVAETYLPN (234 aa).

This is an uncharacterized protein from Sinorhizobium fredii (strain NBRC 101917 / NGR234).